The sequence spans 504 residues: Maturase K (504 aa).

The protein belongs to the intron maturase 2 family. MatK subfamily.

Its subcellular location is the plastid. The protein localises to the chloroplast. Functionally, usually encoded in the trnK tRNA gene intron. Probably assists in splicing its own and other chloroplast group II introns. This chain is Maturase K, found in Betula papyrifera (Paper birch).